Reading from the N-terminus, the 271-residue chain is Tryptophan synthase alpha chain (271 aa).

Active-site proton acceptor residues include Glu56 and Asp67.

Belongs to the TrpA family. Tetramer of two alpha and two beta chains.

It catalyses the reaction (1S,2R)-1-C-(indol-3-yl)glycerol 3-phosphate + L-serine = D-glyceraldehyde 3-phosphate + L-tryptophan + H2O. Its pathway is amino-acid biosynthesis; L-tryptophan biosynthesis; L-tryptophan from chorismate: step 5/5. Functionally, the alpha subunit is responsible for the aldol cleavage of indoleglycerol phosphate to indole and glyceraldehyde 3-phosphate. The sequence is that of Tryptophan synthase alpha chain from Mycolicibacterium paratuberculosis (strain ATCC BAA-968 / K-10) (Mycobacterium paratuberculosis).